The following is an 81-amino-acid chain: Conotoxin Im6.1 (81 aa).

The signal sequence occupies residues 1 to 20; the sequence is MSKLGVVLFTLLLLVPLVTP. The propeptide occupies 21 to 47; that stretch reads ERDGGKWTMLAKNKKAMKRNLMDFITR. 3 disulfide bridges follow: C49/C61, C54/C67, and C60/C76.

Belongs to the conotoxin M superfamily. As to expression, expressed by the venom duct.

The protein localises to the secreted. In Conus imperialis (Imperial cone), this protein is Conotoxin Im6.1.